A 122-amino-acid chain; its full sequence is Large ribosomal subunit protein uL14 (122 aa).

It belongs to the universal ribosomal protein uL14 family. Part of the 50S ribosomal subunit. Forms a cluster with proteins L3 and L19. In the 70S ribosome, L14 and L19 interact and together make contacts with the 16S rRNA in bridges B5 and B8.

Binds to 23S rRNA. Forms part of two intersubunit bridges in the 70S ribosome. The polypeptide is Large ribosomal subunit protein uL14 (Thiobacillus denitrificans (strain ATCC 25259 / T1)).